Here is a 600-residue protein sequence, read N- to C-terminus: ATP-dependent lipid A-core flippase (600 aa).

5 consecutive transmembrane segments (helical) span residues 28–48 (IMAV…IAFI), 80–100 (IMLM…VANF), 182–202 (WKLS…ISVV), 267–287 (ISQP…LYAA), and 295–315 (DLTA…LQPI). The 300-residue stretch at 28 to 327 (IMAVLGLITY…LTRVNAEFQR (300 aa)) folds into the ABC transmembrane type-1 domain. The 238-residue stretch at 359–596 (LAFDNVTFAY…AGIYANLYQM (238 aa)) folds into the ABC transporter domain. ATP is bound at residue 393-400 (GRSGSGKS).

This sequence belongs to the ABC transporter superfamily. Lipid exporter (TC 3.A.1.106) family. As to quaternary structure, homodimer.

It is found in the cell inner membrane. The enzyme catalyses ATP + H2O + lipid A-core oligosaccharideSide 1 = ADP + phosphate + lipid A-core oligosaccharideSide 2.. Involved in lipopolysaccharide (LPS) biosynthesis. Translocates lipid A-core from the inner to the outer leaflet of the inner membrane. Transmembrane domains (TMD) form a pore in the inner membrane and the ATP-binding domain (NBD) is responsible for energy generation. The polypeptide is ATP-dependent lipid A-core flippase (Shewanella frigidimarina (strain NCIMB 400)).